The primary structure comprises 390 residues: Elongation factor Tu 2 (390 aa).

The 192-residue stretch at 10-201 folds into the tr-type G domain; the sequence is KPHVNVGTIG…LDEYVAVPPR (192 aa). Residues 19-26 form a G1 region; it reads GHVDHGKT. 19–26 is a GTP binding site; that stretch reads GHVDHGKT. Thr26 serves as a coordination point for Mg(2+). The G2 stretch occupies residues 55-59; the sequence is GITIA. The interval 76 to 79 is G3; it reads DCPG. GTP is bound by residues 76–80 and 131–134; these read DCPGH and NKAD. Positions 131–134 are G4; the sequence is NKAD. A G5 region spans residues 168 to 170; it reads SAL.

Belongs to the TRAFAC class translation factor GTPase superfamily. Classic translation factor GTPase family. EF-Tu/EF-1A subfamily. In terms of assembly, monomer.

Its subcellular location is the cytoplasm. The catalysed reaction is GTP + H2O = GDP + phosphate + H(+). Its function is as follows. GTP hydrolase that promotes the GTP-dependent binding of aminoacyl-tRNA to the A-site of ribosomes during protein biosynthesis. The sequence is that of Elongation factor Tu 2 from Wolbachia pipientis wMel.